We begin with the raw amino-acid sequence, 526 residues long: Peptide chain release factor 3 (526 aa).

The tr-type G domain occupies 8 to 277 (DKRRTFAIIS…GLTQWAPKPQ (270 aa)). Residues 17–24 (SHPDAGKT), 85–89 (DTPGH), and 139–142 (NKLD) contribute to the GTP site.

The protein belongs to the TRAFAC class translation factor GTPase superfamily. Classic translation factor GTPase family. PrfC subfamily.

It localises to the cytoplasm. Increases the formation of ribosomal termination complexes and stimulates activities of RF-1 and RF-2. It binds guanine nucleotides and has strong preference for UGA stop codons. It may interact directly with the ribosome. The stimulation of RF-1 and RF-2 is significantly reduced by GTP and GDP, but not by GMP. The protein is Peptide chain release factor 3 of Actinobacillus succinogenes (strain ATCC 55618 / DSM 22257 / CCUG 43843 / 130Z).